Consider the following 975-residue polypeptide: Translation initiation factor IF-2 (975 aa).

A compositionally biased stretch (basic and acidic residues) spans aspartate 48 to lysine 63. 2 disordered regions span residues aspartate 48–arginine 84 and lysine 98–threonine 388. A compositionally biased stretch (low complexity) spans glutamate 104–aspartate 115. A compositionally biased stretch (basic and acidic residues) spans alanine 120–alanine 177. The span at lysine 178–glutamine 211 shows a compositional bias: low complexity. Over residues aspartate 212–arginine 263 the composition is skewed to basic and acidic residues. A compositionally biased stretch (low complexity) spans lysine 302–glycine 330. Positions serine 359–lysine 372 are enriched in gly residues. One can recognise a tr-type G domain in the interval proline 475 to lysine 644. Positions glycine 484–threonine 491 are G1. Glycine 484–threonine 491 is a GTP binding site. A G2 region spans residues glycine 509–histidine 513. The G3 stretch occupies residues aspartate 530–glycine 533. GTP is bound by residues aspartate 530–histidine 534 and asparagine 584–aspartate 587. The tract at residues asparagine 584–aspartate 587 is G4. The tract at residues serine 620 to lysine 622 is G5.

It belongs to the TRAFAC class translation factor GTPase superfamily. Classic translation factor GTPase family. IF-2 subfamily.

It localises to the cytoplasm. One of the essential components for the initiation of protein synthesis. Protects formylmethionyl-tRNA from spontaneous hydrolysis and promotes its binding to the 30S ribosomal subunits. Also involved in the hydrolysis of GTP during the formation of the 70S ribosomal complex. This chain is Translation initiation factor IF-2, found in Burkholderia mallei (strain NCTC 10247).